Here is a 311-residue protein sequence, read N- to C-terminus: Progestin and adipoQ receptor family member 3 (311 aa).

The required for interaction with SREBF2 stretch occupies residues 1–20; sequence MHQKLLKSAHYIELGSYQYW. The Cytoplasmic segment spans residues 1–73; the sequence is MHQKLLKSAH…FILSNETVNI (73 aa). The tract at residues 41-60 is required for interaction with SCAP; it reads KDNPYITDGYRAYLPSRLCI. Residues 61 to 71 are golgi targeting; sequence KSLFILSNETV. Residues 74-96 form a helical membrane-spanning segment; it reads WSHLLGFFLFFTLGIYDMTSVLP. Residues 97 to 105 are Lumenal-facing; sequence SASASREDF. The chain crosses the membrane as a helical span at residues 106–128; the sequence is VICSICLFCFQVCMLCSVGYHLF. Residues 129–140 are Cytoplasmic-facing; it reads SCHRSEKTCRRW. Residues 141–163 form a helical membrane-spanning segment; the sequence is MALDYAGISIGILGCYVSGVFYA. Topologically, residues 164–172 are lumenal; it reads FYCNNYWRQ. A helical membrane pass occupies residues 173 to 195; that stretch reads VYLITVLAMILAVFFAQIHPNYL. Over 196 to 201 the chain is Cytoplasmic; that stretch reads TQQWQR. The helical transmembrane segment at 202 to 224 threads the bilayer; that stretch reads LRSIIFCSVSGYGVIPTLHWVWL. Residues 225–238 lie on the Lumenal side of the membrane; the sequence is NGGIGAPIVQDFAP. A helical transmembrane segment spans residues 239 to 256; that stretch reads RVIVMYMIALLAFLFYIS. Residues 257–275 lie on the Cytoplasmic side of the membrane; sequence KVPERYFPGQLNYLGSSHQ. The chain crosses the membrane as a helical span at residues 276–298; that stretch reads IWHILAVVMLYWWHQSTVYVMQY. The segment at 299-303 is golgi targeting; sequence RHSKP. Residues 299–311 lie on the Lumenal side of the membrane; the sequence is RHSKPCPDYVSHL.

The protein belongs to the ADIPOR family. Interacts with SCAP and SREBF2; the interactions are direct, increase in low cholesterol conditions and tether SCAP:SREBP complex to the Golgi apparatus. Interaction with SCAP is mutually exclusive with INSIG1. In hepatocytes, interacts with PPARA and HUWE1; the interactions promote PPARA poylubiquitination and HUWE1-mediated degradation. In macrophages, interacts with PPARG and STUB1; the interactions promote PPARG poylubiquitination and STUB1-mediated degradation. As to expression, widely expressed in a range of tissues.

It localises to the golgi apparatus membrane. Its function is as follows. Golgi-scaffold protein which modulates its interactors acitivies by anchoring them to the Golgi apparatus. Functions as a spatial regulator of RAF1 kinase by sequestrating it to the Golgi apparatus. Acts as a positive regulator of cholesterol biosynthesis by mediating the anchoring of the SCAP:SREBP complex in the Golgi apparatus, thereby promoting SCAP:SREBF2 complex formation, potentiating SREBF2 and SREBF1 processing and enhancing lipid synthesis. Also regulates PPARA and PPARG functions by mediating their interaction with E3 ubiquitin ligases, such as STUB1 or HUWE1, leading to their polyubiquitination and proteasome-mediated degradation. The chain is Progestin and adipoQ receptor family member 3 from Homo sapiens (Human).